A 367-amino-acid chain; its full sequence is tRNA-specific 2-thiouridylase MnmA (367 aa).

ATP is bound by residues 11 to 18 (GLSGGVDS) and leucine 37. Cysteine 99 functions as the Nucleophile in the catalytic mechanism. Cysteine 99 and cysteine 195 are oxidised to a cystine. An ATP-binding site is contributed by glycine 123. Residues 145–147 (KDQ) are interaction with tRNA. Residue cysteine 195 is the Cysteine persulfide intermediate of the active site. Positions 304-305 (RY) are interaction with tRNA.

The protein belongs to the MnmA/TRMU family.

It localises to the cytoplasm. The catalysed reaction is S-sulfanyl-L-cysteinyl-[protein] + uridine(34) in tRNA + AH2 + ATP = 2-thiouridine(34) in tRNA + L-cysteinyl-[protein] + A + AMP + diphosphate + H(+). Functionally, catalyzes the 2-thiolation of uridine at the wobble position (U34) of tRNA, leading to the formation of s(2)U34. The sequence is that of tRNA-specific 2-thiouridylase MnmA from Chlorobium luteolum (strain DSM 273 / BCRC 81028 / 2530) (Pelodictyon luteolum).